Consider the following 100-residue polypeptide: Urease subunit gamma (100 aa).

The protein belongs to the urease gamma subunit family. As to quaternary structure, heterotrimer of UreA (gamma), UreB (beta) and UreC (alpha) subunits. Three heterotrimers associate to form the active enzyme.

The protein resides in the cytoplasm. It catalyses the reaction urea + 2 H2O + H(+) = hydrogencarbonate + 2 NH4(+). It functions in the pathway nitrogen metabolism; urea degradation; CO(2) and NH(3) from urea (urease route): step 1/1. This Nocardia farcinica (strain IFM 10152) protein is Urease subunit gamma.